Reading from the N-terminus, the 780-residue chain is Semaphorin-3G (780 aa).

Residues 1-22 (MDPSAWAICCLLGSLLFHVGIP) form the signal peptide. Residues 32–519 (RLRLSYRDLL…SPLGVARLQL (488 aa)) form the Sema domain. Residue asparagine 44 is glycosylated (N-linked (GlcNAc...) asparagine). An intrachain disulfide couples cysteine 105 to cysteine 116. Asparagine 127 carries N-linked (GlcNAc...) asparagine glycosylation. Intrachain disulfides connect cysteine 134–cysteine 143, cysteine 270–cysteine 382, cysteine 294–cysteine 342, cysteine 522–cysteine 540, and cysteine 603–cysteine 655. Residues 569–671 (PAVQCLGQGQ…FSQTVVRFAL (103 aa)) enclose the Ig-like C2-type domain. Asparagine 652 is a glycosylation site (N-linked (GlcNAc...) asparagine).

It belongs to the semaphorin family. Highly expressed in lung and kidney. Weakly expressed in brain.

The protein resides in the secreted. In terms of biological role, has chemorepulsive activities for sympathetic axons. Ligand of NRP2. The sequence is that of Semaphorin-3G (Sema3g) from Mus musculus (Mouse).